The following is an 853-amino-acid chain: uncharacterized protein (853 aa).

Coiled-coil stretches lie at residues 313 to 343 and 480 to 528; these read RTDE…LKVA and EGQV…SELI.

This is an uncharacterized protein from Ostreid herpesvirus 1 (isolate France) (OsHV-1).